The following is a 754-amino-acid chain: 5-methyltetrahydropteroyltriglutamate--homocysteine methyltransferase (754 aa).

Residues 17-20 (RELK) and Lys-117 contribute to the 5-methyltetrahydropteroyltri-L-glutamate site. L-homocysteine contacts are provided by residues 431 to 433 (IGS) and Glu-484. Residues 431–433 (IGS) and Glu-484 contribute to the L-methionine site. 5-methyltetrahydropteroyltri-L-glutamate-binding positions include 515–516 (RC) and Trp-561. Asp-599 is an L-homocysteine binding site. Position 599 (Asp-599) interacts with L-methionine. Residue Glu-605 coordinates 5-methyltetrahydropteroyltri-L-glutamate. The Zn(2+) site is built by His-641, Cys-643, and Glu-665. Residue His-694 is the Proton donor of the active site. Cys-726 serves as a coordination point for Zn(2+).

It belongs to the vitamin-B12 independent methionine synthase family. Zn(2+) is required as a cofactor.

The enzyme catalyses 5-methyltetrahydropteroyltri-L-glutamate + L-homocysteine = tetrahydropteroyltri-L-glutamate + L-methionine. Its pathway is amino-acid biosynthesis; L-methionine biosynthesis via de novo pathway; L-methionine from L-homocysteine (MetE route): step 1/1. Catalyzes the transfer of a methyl group from 5-methyltetrahydrofolate to homocysteine resulting in methionine formation. This is 5-methyltetrahydropteroyltriglutamate--homocysteine methyltransferase from Salmonella agona (strain SL483).